A 172-amino-acid polypeptide reads, in one-letter code: MVTATLREMLISAEAIRFGDFTLASGKKSTVYIDIKKAITSPAILKKIAAEVLTHSTDFDAVAGVAVGGVPLAVSVSLASDKPYVIIRKEQKGHGLASLIIGDVAGKRILLVEDVTTSGGSAVFGIEQLRSAGAVVTDVIAVVDRNEGAGKTLQGLDITLTPLVRMQDLING.

5-phospho-alpha-D-ribose 1-diphosphate contacts are provided by residues Arg-88, Lys-89, Lys-92, His-94, and 113 to 121; that span reads EDVTTSGGS. Orotate is bound by residues Thr-117 and Arg-145.

The protein belongs to the purine/pyrimidine phosphoribosyltransferase family. PyrE subfamily. As to quaternary structure, homodimer. The cofactor is Mg(2+).

The catalysed reaction is orotidine 5'-phosphate + diphosphate = orotate + 5-phospho-alpha-D-ribose 1-diphosphate. It functions in the pathway pyrimidine metabolism; UMP biosynthesis via de novo pathway; UMP from orotate: step 1/2. In terms of biological role, catalyzes the transfer of a ribosyl phosphate group from 5-phosphoribose 1-diphosphate to orotate, leading to the formation of orotidine monophosphate (OMP). The protein is Orotate phosphoribosyltransferase of Methanospirillum hungatei JF-1 (strain ATCC 27890 / DSM 864 / NBRC 100397 / JF-1).